Here is a 513-residue protein sequence, read N- to C-terminus: Glutamyl-tRNA(Gln) amidotransferase subunit A (513 aa).

Residues Lys-85 and Ser-160 each act as charge relay system in the active site. Ser-184 serves as the catalytic Acyl-ester intermediate.

The protein belongs to the amidase family. GatA subfamily. In terms of assembly, heterotrimer of A, B and C subunits.

It carries out the reaction L-glutamyl-tRNA(Gln) + L-glutamine + ATP + H2O = L-glutaminyl-tRNA(Gln) + L-glutamate + ADP + phosphate + H(+). In terms of biological role, allows the formation of correctly charged Gln-tRNA(Gln) through the transamidation of misacylated Glu-tRNA(Gln) in organisms which lack glutaminyl-tRNA synthetase. The reaction takes place in the presence of glutamine and ATP through an activated gamma-phospho-Glu-tRNA(Gln). The chain is Glutamyl-tRNA(Gln) amidotransferase subunit A from Bifidobacterium longum (strain NCC 2705).